The chain runs to 329 residues: Phosphate import ATP-binding protein PstB (329 aa).

The ABC transporter domain maps to 83–325 (FEIRNFNFWY…PKQKATNSYI (243 aa)). 116-123 (GKSGCGKS) provides a ligand contact to ATP.

The protein belongs to the ABC transporter superfamily. Phosphate importer (TC 3.A.1.7) family. In terms of assembly, the complex is composed of two ATP-binding proteins (PstB), two transmembrane proteins (PstC and PstA) and a solute-binding protein (PstS).

Its subcellular location is the cell membrane. It catalyses the reaction phosphate(out) + ATP + H2O = ADP + 2 phosphate(in) + H(+). Its function is as follows. Part of the ABC transporter complex PstSACB involved in phosphate import. Responsible for energy coupling to the transport system. The chain is Phosphate import ATP-binding protein PstB from Mycoplasma genitalium (strain ATCC 33530 / DSM 19775 / NCTC 10195 / G37) (Mycoplasmoides genitalium).